Reading from the N-terminus, the 500-residue chain is MEIAVQCQNPTTDNSDCVVVGIYEGGILSPAATLVDLASGGALRALLDTGDFTGDCGDTQLLYQVPGMAAARVLVLGLGSHGKVKDSQFRKAALAAARALQGARVGRASLHLLDTPVIRRSAPACAKILVQAVADAEYHFDRHKKPADAPQRPISELQLSISENDTAALAELQGAVAEAQATARAVAWTRDMANEPGNICTPTWLAEQAEAMAGRLGIKSTILGPDAMEALGMHLLLGVAHGSRQPPRLIILEYRGGAENQAPIVLVGKGITFDAGGISLKPADKMDEMKYDMCGGASALAAIQAAAELQLPLNIVTVVPASENLPDGQATKPGDIHRSMNGLSVEVVNTDAEGRLILADTLTYVERFEPDVVIDMATLTGACIIALGHQTAAVMGNHEGLVHDLIAAGKESMDRVWELPLFEEYQEQLKSPVADLSNVGGRPAGTITAACFLSRFTENYRWAHLDIAGVAWKSGEHKGATGRPVPLLVEYLLRRARQVA.

Positions 269 and 274 each coordinate Mn(2+). Residue K281 is part of the active site. Mn(2+)-binding residues include D292, D351, and E353. R355 is a catalytic residue.

It belongs to the peptidase M17 family. It depends on Mn(2+) as a cofactor.

The protein localises to the cytoplasm. It carries out the reaction Release of an N-terminal amino acid, Xaa-|-Yaa-, in which Xaa is preferably Leu, but may be other amino acids including Pro although not Arg or Lys, and Yaa may be Pro. Amino acid amides and methyl esters are also readily hydrolyzed, but rates on arylamides are exceedingly low.. The catalysed reaction is Release of an N-terminal amino acid, preferentially leucine, but not glutamic or aspartic acids.. Functionally, presumably involved in the processing and regular turnover of intracellular proteins. Catalyzes the removal of unsubstituted N-terminal amino acids from various peptides. This is Probable cytosol aminopeptidase from Acidithiobacillus ferrooxidans (strain ATCC 23270 / DSM 14882 / CIP 104768 / NCIMB 8455) (Ferrobacillus ferrooxidans (strain ATCC 23270)).